The sequence spans 394 residues: Chorismate synthase (394 aa).

Residues Arg40 and Arg46 each coordinate NADP(+). FMN contacts are provided by residues 135 to 137, 255 to 256, Gly302, 317 to 321, and Arg343; these read RAS, QA, and KPISS.

It belongs to the chorismate synthase family. As to quaternary structure, homotetramer. It depends on FMNH2 as a cofactor.

It catalyses the reaction 5-O-(1-carboxyvinyl)-3-phosphoshikimate = chorismate + phosphate. Its pathway is metabolic intermediate biosynthesis; chorismate biosynthesis; chorismate from D-erythrose 4-phosphate and phosphoenolpyruvate: step 7/7. In terms of biological role, catalyzes the anti-1,4-elimination of the C-3 phosphate and the C-6 proR hydrogen from 5-enolpyruvylshikimate-3-phosphate (EPSP) to yield chorismate, which is the branch point compound that serves as the starting substrate for the three terminal pathways of aromatic amino acid biosynthesis. This reaction introduces a second double bond into the aromatic ring system. This chain is Chorismate synthase, found in Parafrankia sp. (strain EAN1pec).